The following is a 116-amino-acid chain: Large ribosomal subunit protein bL17 (116 aa).

It belongs to the bacterial ribosomal protein bL17 family. In terms of assembly, part of the 50S ribosomal subunit. Contacts protein L32.

This is Large ribosomal subunit protein bL17 from Nostoc punctiforme (strain ATCC 29133 / PCC 73102).